The sequence spans 491 residues: MKYQAKNTALSQATDCIVLGIYENNKFSKSFNEIDQLTQGYLNDLVKSGELTGKLAQTILLRDLQGLSAKRLLIVGCGKKGELTERQYKQIIQAVLKTLKETNTREVISYLTEIELKDRDLYWNIRFAIETIEHTNYQFDHFKSQKAETSVLESFVFNTDCNQAQQAISHANAISSGIKAARDIANMPPNICNPAYLAEQAKNLAENSTALSLKVVDEEEMAKLGMNAYLAVSKGSENRAYMSVLTFNNALDKNAKPIVLVGKGLTFDAGGISLKPAADMDEMKYDMCGAASVFGTMKAIAQLNLPLNVIGVLAGCENLPDGNAYRPGDILTTMNGLTVEVLNTDAEGRLVLCDTLTYVERFEPELVIDVATLTGACVVALGQHNSGLVSTDNNLANALLQAATETTDKAWRLPLSEEYQEQLKSPFADLANIGGRWGGAITAGAFLSNFTKKYRWAHLDIAGTAWLQGANKGATGRPVSLLTQFLINQVK.

2 residues coordinate Mn(2+): Lys-263 and Asp-268. Lys-275 is a catalytic residue. Mn(2+)-binding residues include Asp-286, Asp-345, and Glu-347. Arg-349 is an active-site residue.

It belongs to the peptidase M17 family. It depends on Mn(2+) as a cofactor.

Its subcellular location is the cytoplasm. The enzyme catalyses Release of an N-terminal amino acid, Xaa-|-Yaa-, in which Xaa is preferably Leu, but may be other amino acids including Pro although not Arg or Lys, and Yaa may be Pro. Amino acid amides and methyl esters are also readily hydrolyzed, but rates on arylamides are exceedingly low.. The catalysed reaction is Release of an N-terminal amino acid, preferentially leucine, but not glutamic or aspartic acids.. In terms of biological role, presumably involved in the processing and regular turnover of intracellular proteins. Catalyzes the removal of unsubstituted N-terminal amino acids from various peptides. This chain is Probable cytosol aminopeptidase, found in Haemophilus influenzae (strain PittGG).